We begin with the raw amino-acid sequence, 229 residues long: Peptidase E (229 aa).

Catalysis depends on charge relay system residues Ser120, Asp135, and His157.

This sequence belongs to the peptidase S51 family.

Its subcellular location is the cytoplasm. It catalyses the reaction Dipeptidase E catalyzes the hydrolysis of dipeptides Asp-|-Xaa. It does not act on peptides with N-terminal Glu, Asn or Gln, nor does it cleave isoaspartyl peptides.. Its function is as follows. Hydrolyzes dipeptides containing N-terminal aspartate residues. May play a role in allowing the cell to use peptide aspartate to spare carbon otherwise required for the synthesis of the aspartate family of amino acids. The chain is Peptidase E from Shigella sonnei (strain Ss046).